The chain runs to 1061 residues: Ceruloplasmin (1061 aa).

Positions 1 to 19 are cleaved as a signal peptide; it reads MKFLLLSTFIFLYSSLALA. 6 consecutive Plastocyanin-like domains span residues 20–199, 208–356, 369–555, 565–713, 725–895, and 903–1057; these read RDKH…LILC, KEKN…VRDC, HVRH…MKIC, RQKD…VNQC, GERT…LIVC, and FSPK…VEQE. Tyr55, Gly64, and Tyr67 together coordinate Na(+). Cu(2+) is bound by residues His120 and His122. His120 lines the O2 pocket. Position 128 (Lys128) interacts with Ca(2+). Asn138 carries N-linked (GlcNAc...) asparagine glycosylation. Residues Gln143, Asp146, and Asp147 each coordinate Ca(2+). Cys173 and Cys199 are disulfide-bonded. The Cu(2+) site is built by His179 and His181. His179 serves as a coordination point for O2. An N-linked (GlcNAc...) asparagine glycan is attached at Asn226. Ser255 provides a ligand contact to Na(+). A disulfide bridge links Cys275 with Cys356. Cu(2+) is bound by residues His294, Cys337, and His342. Residue Asn396 is glycosylated (N-linked (GlcNAc...) asparagine). Positions 407, 416, and 419 each coordinate Na(+). Cys529 and Cys555 are disulfide-bonded. The N-linked (GlcNAc...) asparagine glycan is linked to Asn583. Ser612 serves as a coordination point for Na(+). Cys632 and Cys713 form a disulfide bridge. Cu(2+)-binding residues include His651, Cys694, His699, and Met704. Cys694 acts as the Nucleophile; for glutathione peroxidase activity in catalysis. Asn757 is a glycosylation site (N-linked (GlcNAc...) asparagine). 3 residues coordinate Na(+): Phe762, Gly771, and Tyr774. A disulfide bond links Cys869 and Cys895. Asn921 carries an N-linked (GlcNAc...) asparagine glycan. Ser950 is a Na(+) binding site. Cu(2+) contacts are provided by His989, His992, His994, His1034, Cys1035, His1036, His1040, and Met1045. O2-binding residues include His992 and His994. Position 1036 (His1036) interacts with O2.

The protein belongs to the multicopper oxidase family. Found in a complex with MPO and LTF; interacts directly with MPO and LTF, which allows Fe(3+) incorporation into LTF, activation of CP ferroxidase activity and protection of CP antioxidant properties by MPO. Cu(2+) is required as a cofactor. In terms of tissue distribution, expressed in many tissues, including liver, eye and brain.

The protein resides in the secreted. The enzyme catalyses 4 Fe(2+) + O2 + 4 H(+) = 4 Fe(3+) + 2 H2O. It catalyses the reaction 4 Cu(+) + O2 + 4 H(+) = 4 Cu(2+) + 2 H2O. It carries out the reaction a hydroperoxide + 2 glutathione = an alcohol + glutathione disulfide + H2O. The catalysed reaction is 4 nitric oxide + O2 + 2 H2O = 4 nitrite + 4 H(+). The enzyme catalyses 2 glutathione + H2O2 = glutathione disulfide + 2 H2O. Its function is as follows. Multifunctional blue, copper-binding (6-7 atoms per molecule) glycoprotein. It has ferroxidase activity oxidizing Fe(2+) to Fe(3+) without releasing radical oxygen species. It is involved in iron transport across the cell membrane. Copper ions provide a large number of enzymatic activites. Oxidizes highly toxic ferrous ions to the ferric state for further incorporation onto apo-transferrins, catalyzes Cu(+) oxidation and promotes the oxidation of biogenic amines such as norepinephrin and serotonin. Provides Cu(2+) ions for the ascorbate-mediated deaminase degradation of the heparan sulfate chains of GPC1. Has glutathione peroxidase-like activity, can remove both hydrogen peroxide and lipid hydroperoxide in the presence of thiols. Also shows NO-oxidase and NO2 synthase activities that determine endocrine NO homeostasis. The chain is Ceruloplasmin (Cp) from Mus musculus (Mouse).